Reading from the N-terminus, the 427-residue chain is Histidinol dehydrogenase (427 aa).

NAD(+)-binding residues include Tyr-125, Gln-186, and Asn-209. Substrate-binding residues include Ser-234, Gln-256, and His-259. Residues Gln-256 and His-259 each coordinate Zn(2+). Active-site proton acceptor residues include Glu-325 and His-326. Substrate is bound by residues His-326, Asp-359, Glu-413, and His-419. Residue Asp-359 participates in Zn(2+) binding. Residue His-419 coordinates Zn(2+).

It belongs to the histidinol dehydrogenase family. The cofactor is Zn(2+).

The enzyme catalyses L-histidinol + 2 NAD(+) + H2O = L-histidine + 2 NADH + 3 H(+). Its pathway is amino-acid biosynthesis; L-histidine biosynthesis; L-histidine from 5-phospho-alpha-D-ribose 1-diphosphate: step 9/9. Its function is as follows. Catalyzes the sequential NAD-dependent oxidations of L-histidinol to L-histidinaldehyde and then to L-histidine. The protein is Histidinol dehydrogenase of Leptospira interrogans serogroup Icterohaemorrhagiae serovar Lai (strain 56601).